The primary structure comprises 2109 residues: General transcription factor 3C polypeptide 1 (2109 aa).

The disordered stretch occupies residues 467 to 521 (LPEGEDTFLSESDSEEERSSSKRRGRGSQKDTRASANLRPKTQPHHSTPTKGGWK). Positions 469 to 482 (EGEDTFLSESDSEE) are enriched in acidic residues. Residue Lys529 forms a Glycyl lysine isopeptide (Lys-Gly) (interchain with G-Cter in SUMO2) linkage. Residues 586 to 609 (MENPKESSSSLKTGRHSSGQDKPH) are disordered. The residue at position 667 (Ser667) is a Phosphoserine. Over residues 718-727 (STANRVKTSQ) the composition is skewed to polar residues. Residues 718 to 775 (STANRVKTSQPPVPQGEAEEDSQGKEGPSGSGDSQLSASSRSESGRMKKSDNKMGITP) are disordered. A Phosphoserine modification is found at Ser739. The span at 748 to 759 (SGDSQLSASSRS) shows a compositional bias: low complexity. Positions 760 to 769 (ESGRMKKSDN) are enriched in basic and acidic residues. Residues Lys770 and Lys833 each participate in a glycyl lysine isopeptide (Lys-Gly) (interchain with G-Cter in SUMO2) cross-link. 2 disordered regions span residues 836–857 (SGRA…SEAP) and 1059–1082 (RKNS…ESAM). 2 positions are modified to phosphoserine: Ser1062 and Ser1068. The segment covering 1073–1082 (SLQKEQESAM) has biased composition (basic and acidic residues). Lys1142 participates in a covalent cross-link: Glycyl lysine isopeptide (Lys-Gly) (interchain with G-Cter in SUMO2). Residues 1202–1241 (SLDRNRRVRGGKSQKRKRLKKDPGKKIKRKKKGEFPGEKS) form a disordered region. Basic residues predominate over residues 1207 to 1221 (RRVRGGKSQKRKRLK). 2 positions are modified to phosphoserine: Ser1253 and Ser1611. Residues 1608–1631 (KDGSLEDDEDEEDDLDEGVGGKRR) form a disordered region. A compositionally biased stretch (acidic residues) spans 1612–1624 (LEDDEDEEDDLDE). A phosphoserine mark is found at Ser1632 and Ser1653. Residues 1823 to 1833 (EDADIQREDPQ) show a composition bias toward basic and acidic residues. Residues 1823-1961 (EDADIQREDP…GSEDPRGFTE (139 aa)) are disordered. The span at 1838-1848 (EGSSSEDSPPE) shows a compositional bias: low complexity. Ser1856, Ser1865, Ser1868, Ser1896, and Ser1911 each carry phosphoserine. Residues 1916–1926 (LEDTAAAGAAQ) are compositionally biased toward low complexity. Residues 1937–1947 (SPGQEQLSGQA) are compositionally biased toward polar residues. Position 1969 is a phosphoserine (Ser1969).

This sequence belongs to the TFIIIC subunit 1 family. Part of the TFIIIC subcomplex TFIIIC2, consisting of six subunits, GTF3C1, GTF3C2, GTF3C3, GTF3C4, GTF3C5 and GTF3C6. Interacts with IGHMBP2. Interacts with MAF1.

The protein resides in the nucleus. Required for RNA polymerase III-mediated transcription. Component of TFIIIC that initiates transcription complex assembly on tRNA and is required for transcription of 5S rRNA and other stable nuclear and cytoplasmic RNAs. Binds to the box B promoter element. The chain is General transcription factor 3C polypeptide 1 (GTF3C1) from Homo sapiens (Human).